The following is a 233-amino-acid chain: Transcriptional regulatory protein PrrA (233 aa).

A Response regulatory domain is found at 9–123 (RVLVVDDDSD…ELVARVKALL (115 aa)). Aspartate 58 is modified (4-aspartylphosphate). Positions 134–232 (SETITVGPLE…VRGVGFVLRM (99 aa)) form a DNA-binding region, ompR/PhoB-type.

Post-translationally, phosphorylated by PrrB at Asp-58.

It is found in the cytoplasm. Member of the two-component regulatory system PrrB/PrrA that is involved specifically in early intracellular multiplication of Mycobacterium and is essential for its viability. Upon phosphorylation by PrrB, functions as a transcription regulator by direct binding to promoter regions of target genes to positively regulate their expression. Autoregulates its own expression. This Mycobacterium bovis (strain ATCC BAA-935 / AF2122/97) protein is Transcriptional regulatory protein PrrA (prrA).